The sequence spans 301 residues: Large ribosomal subunit protein uL18 (301 aa).

It belongs to the universal ribosomal protein uL18 family. Component of the large ribosomal subunit (LSU). Mature N.crassa ribosomes consist of a small (40S) and a large (60S) subunit. The 40S small subunit contains 1 molecule of ribosomal RNA (18S rRNA) and at least 32 different proteins. The large 60S subunit contains 3 rRNA molecules (26S, 5.8S and 5S rRNA) and at least 42 different proteins.

It localises to the cytoplasm. In terms of biological role, component of the ribosome, a large ribonucleoprotein complex responsible for the synthesis of proteins in the cell. The small ribosomal subunit (SSU) binds messenger RNAs (mRNAs) and translates the encoded message by selecting cognate aminoacyl-transfer RNA (tRNA) molecules. The large subunit (LSU) contains the ribosomal catalytic site termed the peptidyl transferase center (PTC), which catalyzes the formation of peptide bonds, thereby polymerizing the amino acids delivered by tRNAs into a polypeptide chain. The nascent polypeptides leave the ribosome through a tunnel in the LSU and interact with protein factors that function in enzymatic processing, targeting, and the membrane insertion of nascent chains at the exit of the ribosomal tunnel. This is Large ribosomal subunit protein uL18 (rpl-5) from Neurospora crassa (strain ATCC 24698 / 74-OR23-1A / CBS 708.71 / DSM 1257 / FGSC 987).